The chain runs to 67 residues: Putative sodium channel alpha-toxin Acra5 (67 aa).

One can recognise an LCN-type CS-alpha/beta domain in the interval 2-65 (RDGYIMIKDT…VYGDRGVICR (64 aa)). Disulfide bonds link Cys-13/Cys-64, Cys-17/Cys-40, Cys-26/Cys-45, and Cys-30/Cys-47. Arg-67 is a propeptide (removed by a carboxypeptidase).

It belongs to the long (4 C-C) scorpion toxin superfamily. Sodium channel inhibitor family. Alpha subfamily. Expressed by the venom gland.

Its subcellular location is the secreted. In terms of biological role, alpha toxins bind voltage-independently at site-3 of sodium channels (Nav) and inhibit the inactivation of the activated channels, thereby blocking neuronal transmission. The polypeptide is Putative sodium channel alpha-toxin Acra5 (Androctonus crassicauda (Arabian fat-tailed scorpion)).